Here is a 268-residue protein sequence, read N- to C-terminus: MLLWMVLLLCESMAEAQELFPNPELTEFTNSETMDVILKCTIKVDPKNPTLQLFYTFYKNNHVIQDRSPHSVFSAEAKEENSGLYQCMVDTEDGLIQKKSGYLDIQFWTPVSHPVLTLQHEATNLAVGDKVEFLCEAHQGSLPIFYSFYINGEILGKPLAPSGRAASLLASVKAEWSTKNYSCEAKNNISREISELKKFPLVVSGTAWIKSNMLPIWLPASLLGGMVIAAVVLMYFFKPCKKHARPETPTLKEPDSFLYVSVDNQRYK.

The N-terminal stretch at 1–16 is a signal peptide; that stretch reads MLLWMVLLLCESMAEA. Over 17 to 215 the chain is Extracellular; the sequence is QELFPNPELT…TAWIKSNMLP (199 aa). The 81-residue stretch at 114–194 folds into the Ig-like C2-type domain; it reads PVLTLQHEAT…AKNNISREIS (81 aa). C135 and C183 are disulfide-bonded. Residues N180 and N188 are each glycosylated (N-linked (GlcNAc...) asparagine). Residues 216-236 traverse the membrane as a helical segment; that stretch reads IWLPASLLGGMVIAAVVLMYF. The Cytoplasmic segment spans residues 237–268; sequence FKPCKKHARPETPTLKEPDSFLYVSVDNQRYK.

As to quaternary structure, interacts with class II MHC.

Its subcellular location is the cell membrane. Functionally, acts as a MHC class II receptor. When stimulated on its own, does not play a role in cytokine production or the release of cytotoxic granules by NK cells and cytotoxic CD8(+) T cells. Does not act as an Fc receptor. The polypeptide is Fc receptor-like protein 6 (Fcrl6) (Mus musculus (Mouse)).